The primary structure comprises 455 residues: Glutamyl-tRNA reductase (455 aa).

Residues 49-52, Ser-109, 114-116, and Gln-120 contribute to the substrate site; these read TCNR and ETQ. Residue Cys-50 is the Nucleophile of the active site. Position 189-194 (189-194) interacts with NADP(+); the sequence is GAGKMG.

The protein belongs to the glutamyl-tRNA reductase family. As to quaternary structure, homodimer.

The catalysed reaction is (S)-4-amino-5-oxopentanoate + tRNA(Glu) + NADP(+) = L-glutamyl-tRNA(Glu) + NADPH + H(+). Its pathway is porphyrin-containing compound metabolism; protoporphyrin-IX biosynthesis; 5-aminolevulinate from L-glutamyl-tRNA(Glu): step 1/2. Functionally, catalyzes the NADPH-dependent reduction of glutamyl-tRNA(Glu) to glutamate 1-semialdehyde (GSA). The polypeptide is Glutamyl-tRNA reductase (Bacillus subtilis (strain 168)).